Reading from the N-terminus, the 258-residue chain is MLLVLVVLIPVLVSSGGPDGHYEMLGTCRMVCDPYPARGPGAGARSDGGDALSEQSGAPPPSTLVQGPQGKPGRTGKPGPPGPPGDRGPPGPVGPPGEKGEPGKPGPPGLPGSGGSGAISTATYTTVPRVAFYAGLKNPHEGYEVLKFDDVVTNLGNNYDAASGKFTCNIPGTYFFTYHVLMRGGDGTSMWADLCKNGQVRASAIAQDADQNYDYASNSVILHLDAGDEVFIKLDGGKAHGGNSNKYSTFSGFIIYSD.

Positions 1–16 are cleaved as a signal peptide; that stretch reads MLLVLVVLIPVLVSSG. Residues 39–120 are disordered; that stretch reads GPGAGARSDG…PGSGGSGAIS (82 aa). Positions 67–77 are enriched in low complexity; the sequence is GPQGKPGRTGK. The region spanning 67-115 is the Collagen-like domain; sequence GPQGKPGRTGKPGPPGPPGDRGPPGPVGPPGEKGEPGKPGPPGLPGSGG. Residues 78–95 show a composition bias toward pro residues; that stretch reads PGPPGPPGDRGPPGPVGP. The region spanning 125–258 is the C1q domain; the sequence is TTVPRVAFYA…TFSGFIIYSD (134 aa).

Interacts with ADGRB3. Forms heterooligomers with C1QL4, when proteins are coexpressed; this interaction does not occur after secretion. As to expression, expressed in brainstem. More abundant in areas of the nervous system involved in motor function, such as the Purkinje cells of the cerebellum, the accessory olivary nucleus, the pons and the red nucleus.

The protein localises to the secreted. Its function is as follows. May regulate the number of excitatory synapses that are formed on hippocampus neurons. Has no effect on inhibitory synapses. The sequence is that of C1q-related factor (C1ql1) from Mus musculus (Mouse).